Consider the following 130-residue polypeptide: DNA-directed RNA polymerase subunit omega (130 aa).

Disordered regions lie at residues 79-98 (EPEP…VDAD) and 109-130 (EEEL…EEDE).

The protein belongs to the RNA polymerase subunit omega family. In terms of assembly, the RNAP catalytic core consists of 2 alpha, 1 beta, 1 beta' and 1 omega subunit. When a sigma factor is associated with the core the holoenzyme is formed, which can initiate transcription.

It catalyses the reaction RNA(n) + a ribonucleoside 5'-triphosphate = RNA(n+1) + diphosphate. Its function is as follows. Promotes RNA polymerase assembly. Latches the N- and C-terminal regions of the beta' subunit thereby facilitating its interaction with the beta and alpha subunits. In Bradyrhizobium diazoefficiens (strain JCM 10833 / BCRC 13528 / IAM 13628 / NBRC 14792 / USDA 110), this protein is DNA-directed RNA polymerase subunit omega (rpoZ).